We begin with the raw amino-acid sequence, 294 residues long: Nucleotide-binding protein Adeh_0147 (294 aa).

17-24 (GVSGSGKS) contributes to the ATP binding site. 68 to 71 (DARE) is a binding site for GTP.

It belongs to the RapZ-like family.

Displays ATPase and GTPase activities. This chain is Nucleotide-binding protein Adeh_0147, found in Anaeromyxobacter dehalogenans (strain 2CP-C).